The sequence spans 355 residues: S-adenosylmethionine:tRNA ribosyltransferase-isomerase (355 aa).

It belongs to the QueA family. As to quaternary structure, monomer.

The protein resides in the cytoplasm. It carries out the reaction 7-aminomethyl-7-carbaguanosine(34) in tRNA + S-adenosyl-L-methionine = epoxyqueuosine(34) in tRNA + adenine + L-methionine + 2 H(+). Its pathway is tRNA modification; tRNA-queuosine biosynthesis. Its function is as follows. Transfers and isomerizes the ribose moiety from AdoMet to the 7-aminomethyl group of 7-deazaguanine (preQ1-tRNA) to give epoxyqueuosine (oQ-tRNA). This Erwinia tasmaniensis (strain DSM 17950 / CFBP 7177 / CIP 109463 / NCPPB 4357 / Et1/99) protein is S-adenosylmethionine:tRNA ribosyltransferase-isomerase.